A 195-amino-acid polypeptide reads, in one-letter code: NADH-quinone oxidoreductase subunit B (195 aa).

4 residues coordinate [4Fe-4S] cluster: cysteine 74, cysteine 75, cysteine 139, and cysteine 169.

It belongs to the complex I 20 kDa subunit family. As to quaternary structure, NDH-1 is composed of 14 different subunits. Subunits NuoB, C, D, E, F, and G constitute the peripheral sector of the complex. The cofactor is [4Fe-4S] cluster.

It localises to the cell inner membrane. It catalyses the reaction a quinone + NADH + 5 H(+)(in) = a quinol + NAD(+) + 4 H(+)(out). NDH-1 shuttles electrons from NADH, via FMN and iron-sulfur (Fe-S) centers, to quinones in the respiratory chain. The immediate electron acceptor for the enzyme in this species is believed to be ubiquinone. Couples the redox reaction to proton translocation (for every two electrons transferred, four hydrogen ions are translocated across the cytoplasmic membrane), and thus conserves the redox energy in a proton gradient. This chain is NADH-quinone oxidoreductase subunit B, found in Methylorubrum extorquens (strain PA1) (Methylobacterium extorquens).